Consider the following 517-residue polypeptide: Bifunctional purine biosynthesis protein PurH (517 aa).

The MGS-like domain occupies 1-145 (MSPLALVSVS…KNHADVAVLV (145 aa)).

It belongs to the PurH family.

It carries out the reaction (6R)-10-formyltetrahydrofolate + 5-amino-1-(5-phospho-beta-D-ribosyl)imidazole-4-carboxamide = 5-formamido-1-(5-phospho-D-ribosyl)imidazole-4-carboxamide + (6S)-5,6,7,8-tetrahydrofolate. The catalysed reaction is IMP + H2O = 5-formamido-1-(5-phospho-D-ribosyl)imidazole-4-carboxamide. Its pathway is purine metabolism; IMP biosynthesis via de novo pathway; 5-formamido-1-(5-phospho-D-ribosyl)imidazole-4-carboxamide from 5-amino-1-(5-phospho-D-ribosyl)imidazole-4-carboxamide (10-formyl THF route): step 1/1. The protein operates within purine metabolism; IMP biosynthesis via de novo pathway; IMP from 5-formamido-1-(5-phospho-D-ribosyl)imidazole-4-carboxamide: step 1/1. This is Bifunctional purine biosynthesis protein PurH from Prochlorococcus marinus (strain MIT 9515).